The following is a 140-amino-acid chain: FAD synthase (140 aa).

ATP is bound by residues 10–11 (TF), 15–18 (HPGH), and Asn93.

The protein belongs to the archaeal FAD synthase family. In terms of assembly, homodimer. A divalent metal cation is required as a cofactor.

The catalysed reaction is FMN + ATP + H(+) = FAD + diphosphate. Its pathway is cofactor biosynthesis; FAD biosynthesis; FAD from FMN: step 1/1. Functionally, catalyzes the transfer of the AMP portion of ATP to flavin mononucleotide (FMN) to produce flavin adenine dinucleotide (FAD) coenzyme. This is FAD synthase from Methanocella arvoryzae (strain DSM 22066 / NBRC 105507 / MRE50).